Here is a 160-residue protein sequence, read N- to C-terminus: Cyclic pyranopterin monophosphate synthase (160 aa).

Substrate contacts are provided by residues 73-75 (LCH) and 110-111 (ME). Residue Asp125 is part of the active site.

This sequence belongs to the MoaC family. Homohexamer; trimer of dimers.

It catalyses the reaction (8S)-3',8-cyclo-7,8-dihydroguanosine 5'-triphosphate = cyclic pyranopterin phosphate + diphosphate. It participates in cofactor biosynthesis; molybdopterin biosynthesis. Catalyzes the conversion of (8S)-3',8-cyclo-7,8-dihydroguanosine 5'-triphosphate to cyclic pyranopterin monophosphate (cPMP). This Pseudomonas aeruginosa (strain LESB58) protein is Cyclic pyranopterin monophosphate synthase.